Here is a 118-residue protein sequence, read N- to C-terminus: Large ribosomal subunit protein bL20 (118 aa).

This sequence belongs to the bacterial ribosomal protein bL20 family.

Binds directly to 23S ribosomal RNA and is necessary for the in vitro assembly process of the 50S ribosomal subunit. It is not involved in the protein synthesizing functions of that subunit. This is Large ribosomal subunit protein bL20 from Leptothrix cholodnii (strain ATCC 51168 / LMG 8142 / SP-6) (Leptothrix discophora (strain SP-6)).